The chain runs to 184 residues: MNLDDLFEQKGEVAKSVLEELEKVMGEYGYNIEHILMVDIIPDDSVRRAMNEINAAQRMQLASLYKGEAEKILQVKRAEAEAEAKYLGGVGVARQRQAITDGLRENILNFSHKVEGTSAKEVMDLIMITQYFDTIKDLGNSSKNTTVFIPHGPGHVRDIGEQIRNGLMESARAGINIERFCISP.

This chain is Protein PPLZ12 (PPLZ12), found in Lupinus polyphyllus (Large-leaved lupine).